The sequence spans 298 residues: Tyrosine recombinase XerC (298 aa).

Positions 1–84 (MNHIQEAFLN…TLRTFYEYWM (84 aa)) constitute a Core-binding (CB) domain. The Tyr recombinase domain occupies 105–286 (YLPQFFYEEE…SNQQLRKVYL (182 aa)). Active-site residues include Arg145, Lys169, His238, Arg241, and His264. The O-(3'-phospho-DNA)-tyrosine intermediate role is filled by Tyr273.

This sequence belongs to the 'phage' integrase family. XerC subfamily. Forms a cyclic heterotetrameric complex composed of two molecules of XerC and two molecules of XerD.

The protein resides in the cytoplasm. Functionally, site-specific tyrosine recombinase, which acts by catalyzing the cutting and rejoining of the recombining DNA molecules. The XerC-XerD complex is essential to convert dimers of the bacterial chromosome into monomers to permit their segregation at cell division. It also contributes to the segregational stability of plasmids. The protein is Tyrosine recombinase XerC of Staphylococcus aureus (strain MSSA476).